A 309-amino-acid polypeptide reads, in one-letter code: Methionyl-tRNA formyltransferase (309 aa).

Residue 107-110 (SLLP) coordinates (6S)-5,6,7,8-tetrahydrofolate.

It belongs to the Fmt family.

The enzyme catalyses L-methionyl-tRNA(fMet) + (6R)-10-formyltetrahydrofolate = N-formyl-L-methionyl-tRNA(fMet) + (6S)-5,6,7,8-tetrahydrofolate + H(+). Attaches a formyl group to the free amino group of methionyl-tRNA(fMet). The formyl group appears to play a dual role in the initiator identity of N-formylmethionyl-tRNA by promoting its recognition by IF2 and preventing the misappropriation of this tRNA by the elongation apparatus. This chain is Methionyl-tRNA formyltransferase, found in Borrelia duttonii (strain Ly).